We begin with the raw amino-acid sequence, 780 residues long: ATP-dependent 6-phosphofructokinase, liver type (780 aa).

The residue at position 2 (Ala2) is an N-acetylalanine. The segment at Ala2–His390 is N-terminal catalytic PFK domain 1. ATP-binding positions include Gly25, Arg88–Cys89, and Gly118–Ser121. A Mg(2+)-binding site is contributed by Asp119. Substrate contacts are provided by residues Ser164–Asp166, Arg201, Met208–Arg210, Glu264, Arg292, and His298–Arg301. The active-site Proton acceptor is the Asp166. Position 377 is a phosphoserine (Ser377). Positions Gln391–Phe400 are interdomain linker. The C-terminal regulatory PFK domain 2 stretch occupies residues Ser401–Phe780. Beta-D-fructose 2,6-bisphosphate is bound by residues Arg470, Thr527–Asn531, Arg565, Met572–Gly574, and Glu628. Ser529 carries an O-linked (GlcNAc) serine glycan. Position 640 is a phosphotyrosine (Tyr640). Beta-D-fructose 2,6-bisphosphate is bound by residues Arg654, His660 to Gln663, and Arg734. The residue at position 775 (Ser775) is a Phosphoserine.

This sequence belongs to the phosphofructokinase type A (PFKA) family. ATP-dependent PFK group I subfamily. Eukaryotic two domain clade 'E' sub-subfamily. In terms of assembly, homo- and heterotetramers. Phosphofructokinase (PFK) enzyme functions as a tetramer composed of different combinations of 3 types of subunits, called PFKM (M), PFKL (L) and PFKP (P). The composition of the PFK tetramer differs according to the tissue type it is present in. The kinetic and regulatory properties of the tetrameric enzyme are dependent on the subunit composition, hence can vary across tissues. Mg(2+) serves as cofactor. GlcNAcylation at Ser-529 by OGT decreases enzyme activity, leading to redirect glucose flux through the oxidative pentose phosphate pathway. Glycosylation is stimulated by both hypoxia and glucose deprivation.

It is found in the cytoplasm. The enzyme catalyses beta-D-fructose 6-phosphate + ATP = beta-D-fructose 1,6-bisphosphate + ADP + H(+). The protein operates within carbohydrate degradation; glycolysis; D-glyceraldehyde 3-phosphate and glycerone phosphate from D-glucose: step 3/4. Allosterically activated by ADP, AMP, or fructose 2,6-bisphosphate, and allosterically inhibited by ATP or citrate. GlcNAcylation by OGT overcomes allosteric regulation. Its function is as follows. Catalyzes the phosphorylation of D-fructose 6-phosphate to fructose 1,6-bisphosphate by ATP, the first committing step of glycolysis. Negatively regulates the phagocyte oxidative burst in response to bacterial infection by controlling cellular NADPH biosynthesis and NADPH oxidase-derived reactive oxygen species. Upon macrophage activation, drives the metabolic switch toward glycolysis, thus preventing glucose turnover that produces NADPH via pentose phosphate pathway. This is ATP-dependent 6-phosphofructokinase, liver type (PFKL) from Bos taurus (Bovine).